A 445-amino-acid chain; its full sequence is NAD-specific glutamate dehydrogenase (445 aa).

Residue Lys-124 is part of the active site. Residue 235 to 241 (GFGNVAW) coordinates NAD(+).

It belongs to the Glu/Leu/Phe/Val dehydrogenases family. As to quaternary structure, homohexamer.

It catalyses the reaction L-glutamate + NAD(+) + H2O = 2-oxoglutarate + NH4(+) + NADH + H(+). The protein is NAD-specific glutamate dehydrogenase (gdhB) of Bacteroides fragilis (strain YCH46).